Consider the following 503-residue polypeptide: Arabinose import ATP-binding protein AraG 1 (503 aa).

ABC transporter domains follow at residues 5–240 (LRFD…MVGR) and 253–497 (LGDV…LPQG). 37 to 44 (GENGAGKS) contacts ATP.

The protein belongs to the ABC transporter superfamily. Arabinose importer (TC 3.A.1.2.2) family. The complex is composed of two ATP-binding proteins (AraG), two transmembrane proteins (AraH) and a solute-binding protein (AraF).

The protein resides in the cell inner membrane. It catalyses the reaction L-arabinose(out) + ATP + H2O = L-arabinose(in) + ADP + phosphate + H(+). Its function is as follows. Part of the ABC transporter complex AraFGH involved in arabinose import. Responsible for energy coupling to the transport system. The chain is Arabinose import ATP-binding protein AraG 1 from Burkholderia thailandensis (strain ATCC 700388 / DSM 13276 / CCUG 48851 / CIP 106301 / E264).